Reading from the N-terminus, the 136-residue chain is Large-conductance mechanosensitive channel (136 aa).

2 helical membrane-spanning segments follow: residues 9-29 and 78-98; these read AFAV…GAAF and FIQT…GVKA.

This sequence belongs to the MscL family. Homopentamer.

It localises to the cell inner membrane. In terms of biological role, channel that opens in response to stretch forces in the membrane lipid bilayer. May participate in the regulation of osmotic pressure changes within the cell. The chain is Large-conductance mechanosensitive channel from Azotobacter vinelandii (strain DJ / ATCC BAA-1303).